Reading from the N-terminus, the 317-residue chain is Beta-sarcoglycan (317 aa).

The interval 1 to 31 (MAAAAAATEQQSSNGPVKKSMREKAVERRNV) is disordered. Topologically, residues 1–64 (MAAAAAATEQ…GLRGRKGNLA (64 aa)) are cytoplasmic. Basic and acidic residues predominate over residues 20–31 (SMREKAVERRNV). Residues 65-85 (ICVIVLLFILAVINLIITLVI) traverse the membrane as a helical; Signal-anchor for type II membrane protein segment. The Extracellular segment spans residues 86–317 (WAVIRIGPNG…TSDNPCGDLY (232 aa)). N-linked (GlcNAc...) asparagine glycans are attached at residues N157, N210, and N257. 2 disulfide bridges follow: C287–C313 and C289–C306.

Belongs to the sarcoglycan beta/delta/gamma/zeta family. In terms of assembly, cross-link to form 2 major subcomplexes: one consisting of SGCB, SGCD and SGCG and the other consisting of SGCB and SGCD. The association between SGCB and SGCG is particularly strong while SGCA is loosely associated with the other sarcoglycans. Post-translationally, disulfide bonds are present.

Its subcellular location is the cell membrane. The protein localises to the sarcolemma. It localises to the cytoplasm. It is found in the cytoskeleton. Functionally, component of the sarcoglycan complex, a subcomplex of the dystrophin-glycoprotein complex which forms a link between the F-actin cytoskeleton and the extracellular matrix. This Bos taurus (Bovine) protein is Beta-sarcoglycan (SGCB).